The following is a 906-amino-acid chain: Protein translocase subunit SecA (906 aa).

ATP is bound by residues glutamine 86, 104–108 (GEGKT), and aspartate 499. Positions 865 to 885 (VSRIDPKDRNPEDPTSWGRVS) are disordered. Residues cysteine 890, cysteine 892, cysteine 901, and histidine 902 each coordinate Zn(2+).

It belongs to the SecA family. As to quaternary structure, monomer and homodimer. Part of the essential Sec protein translocation apparatus which comprises SecA, SecYEG and auxiliary proteins SecDF-YajC and YidC. It depends on Zn(2+) as a cofactor.

The protein resides in the cell inner membrane. It is found in the cytoplasm. It carries out the reaction ATP + H2O + cellular proteinSide 1 = ADP + phosphate + cellular proteinSide 2.. Its function is as follows. Part of the Sec protein translocase complex. Interacts with the SecYEG preprotein conducting channel. Has a central role in coupling the hydrolysis of ATP to the transfer of proteins into and across the cell membrane, serving both as a receptor for the preprotein-SecB complex and as an ATP-driven molecular motor driving the stepwise translocation of polypeptide chains across the membrane. The protein is Protein translocase subunit SecA of Rickettsia canadensis (strain McKiel).